A 352-amino-acid chain; its full sequence is Protein RecA (352 aa).

Residue 67–74 (GPESSGKT) coordinates ATP.

The protein belongs to the RecA family.

The protein resides in the cytoplasm. Its function is as follows. Can catalyze the hydrolysis of ATP in the presence of single-stranded DNA, the ATP-dependent uptake of single-stranded DNA by duplex DNA, and the ATP-dependent hybridization of homologous single-stranded DNAs. It interacts with LexA causing its activation and leading to its autocatalytic cleavage. The sequence is that of Protein RecA from Enterobacter sp. (strain 638).